The following is a 541-amino-acid chain: Ankyrin repeat domain-containing protein 13C (541 aa).

Over residues 1–20 (MTGEKIRSLRRDHKPSKEDG) the composition is skewed to basic and acidic residues. Residues 1–53 (MTGEKIRSLRRDHKPSKEDGDVLEPCEEEATAALGGAFTGGRSGPGGSGKGGK) are disordered. Over residues 21-30 (DVLEPCEEEA) the composition is skewed to acidic residues. Positions 37-52 (AFTGGRSGPGGSGKGG) are enriched in gly residues. ANK repeat units follow at residues 111–142 (PSLY…QKDN), 143–172 (HGNT…PVKV), and 176–205 (QGWS…QQSR). Ser-411 is subject to Phosphoserine.

The protein resides in the endoplasmic reticulum membrane. Its function is as follows. Acts as a molecular chaperone for G protein-coupled receptors, regulating their biogenesis and exit from the ER. This is Ankyrin repeat domain-containing protein 13C (Ankrd13c) from Mus musculus (Mouse).